The primary structure comprises 202 residues: Small ribosomal subunit protein uS4 (202 aa).

Residues 22 to 43 (TRKSARRAYPPGQHGQNRKKRS) are disordered. The S4 RNA-binding domain maps to 90 to 152 (MRLDNTVFRL…APSRKLVENN (63 aa)).

It belongs to the universal ribosomal protein uS4 family. As to quaternary structure, part of the 30S ribosomal subunit. Contacts protein S5. The interaction surface between S4 and S5 is involved in control of translational fidelity.

In terms of biological role, one of the primary rRNA binding proteins, it binds directly to 16S rRNA where it nucleates assembly of the body of the 30S subunit. Functionally, with S5 and S12 plays an important role in translational accuracy. The protein is Small ribosomal subunit protein uS4 of Nostoc sp. (strain PCC 7120 / SAG 25.82 / UTEX 2576).